The sequence spans 460 residues: Phosphoglucosamine mutase (460 aa).

The active-site Phosphoserine intermediate is the Ser-102. Mg(2+) contacts are provided by Ser-102, Asp-241, Asp-243, and Asp-245. Ser-102 bears the Phosphoserine mark.

Belongs to the phosphohexose mutase family. Mg(2+) is required as a cofactor. Activated by phosphorylation.

The enzyme catalyses alpha-D-glucosamine 1-phosphate = D-glucosamine 6-phosphate. In terms of biological role, catalyzes the conversion of glucosamine-6-phosphate to glucosamine-1-phosphate. In Verminephrobacter eiseniae (strain EF01-2), this protein is Phosphoglucosamine mutase.